Reading from the N-terminus, the 127-residue chain is Arginine decarboxylase proenzyme (127 aa).

The active-site Schiff-base intermediate with substrate; via pyruvic acid is Ser72. Position 72 is a pyruvic acid (Ser); by autocatalysis (Ser72). His77 serves as the catalytic Proton acceptor; for processing activity. The Proton donor; for catalytic activity role is filled by Cys92.

It belongs to the prokaryotic AdoMetDC family. Type 1 subfamily. In terms of assembly, heterooctamer of four alpha and four beta chains arranged as a tetramer of alpha/beta heterodimers. Pyruvate is required as a cofactor. Is synthesized initially as an inactive proenzyme. Formation of the active enzyme involves a self-maturation process in which the active site pyruvoyl group is generated from an internal serine residue via an autocatalytic post-translational modification. Two non-identical subunits are generated from the proenzyme in this reaction, and the pyruvate is formed at the N-terminus of the alpha chain, which is derived from the carboxyl end of the proenzyme. The post-translation cleavage follows an unusual pathway, termed non-hydrolytic serinolysis, in which the side chain hydroxyl group of the serine supplies its oxygen atom to form the C-terminus of the beta chain, while the remainder of the serine residue undergoes an oxidative deamination to produce ammonia and the pyruvoyl group blocking the N-terminus of the alpha chain.

The catalysed reaction is L-arginine + H(+) = agmatine + CO2. It functions in the pathway amine and polyamine biosynthesis; agmatine biosynthesis; agmatine from L-arginine: step 1/1. Functionally, specifically catalyzes the decarboxylation of L-arginine to agmatine. Has no S-adenosylmethionine decarboxylase (AdoMetDC) activity. In Staphylothermus marinus (strain ATCC 43588 / DSM 3639 / JCM 9404 / F1), this protein is Arginine decarboxylase proenzyme.